Consider the following 470-residue polypeptide: FAD-dependent monooxygenase SAT7 (470 aa).

The chain crosses the membrane as a helical span at residues 28-48 (GLSVAIVGGGIVGIALALGLV). 3 residues coordinate FAD: glutamate 58, alanine 71, and arginine 143. Residues arginine 227 and tyrosine 260 contribute to the active site. Residues aspartate 351 and alanine 364 each coordinate FAD.

This sequence belongs to the paxM FAD-dependent monooxygenase family. It depends on FAD as a cofactor.

The protein resides in the membrane. Its pathway is mycotoxin biosynthesis. Its function is as follows. FAD-dependent monooxygenase; part of the satratoxin SC1 cluster involved in the biosynthesis of satratoxins, trichothecene mycotoxins that are associated with human food poisonings. Satratoxins are suggested to be made by products of multiple gene clusters (SC1, SC2 and SC3) that encode 21 proteins in all, including polyketide synthases, acetyltransferases, and other enzymes expected to modify the trichothecene skeleton. SC1 encodes 10 proteins, SAT1 to SAT10. The largest are SAT8, which encodes a putative polyketide synthase (PKS) with a conventional non-reducing architecture, and SAT10, a putative protein containing four ankyrin repeats and thus may be involved in protein scaffolding. The putative short-chain reductase SAT3 may assist the PKS in some capacity. SAT6 contains a secretory lipase domain and acts probably as a trichothecene esterase. SAT5 encodes a putative acetyltransferase, and so, with SAT6, may affect endogenous protection from toxicity. The probable transcription factor SAT9 may regulate the expression of the SC1 cluster. SC2 encodes proteins SAT11 to SAT16, the largest of which encodes the putative reducing PKS SAT13. SAT11 is a cytochrome P450 monooxygenase, while SAT14 and SAT16 are probable acetyltransferases. The SC2 cluster may be regulated by the transcription factor SAT15. SC3 is a small cluster that encodes 5 proteins, SAT17 to SAT21. SAT21 is a putative MFS-type transporter which may have a role in exporting secondary metabolites. The four other proteins putatively encoded in SC3 include the taurine hydroxylase-like protein SAT17, the O-methyltransferase SAT18, the acetyltransferase SAT19, and the Cys6-type zinc finger SAT20, the latter being probably involved in regulation of SC3 expression. The protein is FAD-dependent monooxygenase SAT7 of Stachybotrys chartarum (strain CBS 109288 / IBT 7711) (Toxic black mold).